The following is a 144-amino-acid chain: 3-hydroxyacyl-[acyl-carrier-protein] dehydratase FabZ (144 aa).

Histidine 48 is an active-site residue.

This sequence belongs to the thioester dehydratase family. FabZ subfamily.

Its subcellular location is the cytoplasm. The catalysed reaction is a (3R)-hydroxyacyl-[ACP] = a (2E)-enoyl-[ACP] + H2O. In terms of biological role, involved in unsaturated fatty acids biosynthesis. Catalyzes the dehydration of short chain beta-hydroxyacyl-ACPs and long chain saturated and unsaturated beta-hydroxyacyl-ACPs. In Bacillus thuringiensis (strain Al Hakam), this protein is 3-hydroxyacyl-[acyl-carrier-protein] dehydratase FabZ.